The sequence spans 44 residues: 2S seed storage albumin protein (44 aa).

Cystine bridges form between C7/C42 and C19/C31.

The protein belongs to the 2S seed storage albumins family. The mature protein consists of a small and a large chain linked by 2 disulfide bonds.

In terms of biological role, this is a 2S seed storage protein. Has antifungal activity. Inhibits spore germination in H.sativum (IC(50)=62.5 ug/ml) and P.betae (IC(50)=62.5 ug/ml). Inhibits growth of H.sativum, V.albo-atrum and P.infestans. The polypeptide is 2S seed storage albumin protein (Taraxacum officinale (Common dandelion)).